We begin with the raw amino-acid sequence, 142 residues long: C-type lectin 13 (142 aa).

Residues Met1 to Ala23 form the signal peptide. Cystine bridges form between Cys25/Cys36, Cys53/Cys138, and Cys115/Cys130. One can recognise a C-type lectin domain in the interval Tyr32 to Lys139.

It belongs to the snaclec family. In terms of assembly, heteromultimer; disulfide-linked. In terms of tissue distribution, expressed by the venom gland.

It is found in the secreted. In terms of biological role, interferes with one step of hemostasis (modulation of platelet aggregation, or coagulation cascade, for example). This chain is C-type lectin 13, found in Crotalus adamanteus (Eastern diamondback rattlesnake).